Consider the following 430-residue polypeptide: 4-hydroxy-3-methylbut-2-en-1-yl diphosphate synthase (flavodoxin) (430 aa).

4 residues coordinate [4Fe-4S] cluster: Cys-310, Cys-313, Cys-356, and Glu-363.

Belongs to the IspG family. The cofactor is [4Fe-4S] cluster.

The enzyme catalyses (2E)-4-hydroxy-3-methylbut-2-enyl diphosphate + oxidized [flavodoxin] + H2O + 2 H(+) = 2-C-methyl-D-erythritol 2,4-cyclic diphosphate + reduced [flavodoxin]. Its pathway is isoprenoid biosynthesis; isopentenyl diphosphate biosynthesis via DXP pathway; isopentenyl diphosphate from 1-deoxy-D-xylulose 5-phosphate: step 5/6. In terms of biological role, converts 2C-methyl-D-erythritol 2,4-cyclodiphosphate (ME-2,4cPP) into 1-hydroxy-2-methyl-2-(E)-butenyl 4-diphosphate. This is 4-hydroxy-3-methylbut-2-en-1-yl diphosphate synthase (flavodoxin) from Nitrobacter winogradskyi (strain ATCC 25391 / DSM 10237 / CIP 104748 / NCIMB 11846 / Nb-255).